Consider the following 545-residue polypeptide: Chaperonin GroEL (545 aa).

ATP-binding positions include 30-33, Lys-51, 87-91, Gly-415, and Asp-494; these read TMGP and DGTTT.

The protein belongs to the chaperonin (HSP60) family. In terms of assembly, forms a cylinder of 14 subunits composed of two heptameric rings stacked back-to-back. Interacts with the co-chaperonin GroES.

The protein resides in the cytoplasm. The enzyme catalyses ATP + H2O + a folded polypeptide = ADP + phosphate + an unfolded polypeptide.. Functionally, together with its co-chaperonin GroES, plays an essential role in assisting protein folding. The GroEL-GroES system forms a nano-cage that allows encapsulation of the non-native substrate proteins and provides a physical environment optimized to promote and accelerate protein folding. This Helicobacter hepaticus (strain ATCC 51449 / 3B1) protein is Chaperonin GroEL.